Consider the following 1228-residue polypeptide: Myosin-1 (1228 aa).

The interval 1-27 (MAVTKRAGRRAQGGTQPAKGAQGVKKA) is disordered. The Myosin motor domain maps to 37–716 (VGVSDLTLLS…TLFALEHMRD (680 aa)). 130-137 (GESGAGKT) is an ATP binding site. The residue at position 358 (S358) is a Phosphoserine. The interval 405–487 (TIGILDIYGF…PGIFAALNDA (83 aa)) is actin-binding. IQ domains are found at residues 720–740 (HNMA…KTEC) and 741–768 (AIKI…SGHK). One can recognise a TH1 domain in the interval 776–962 (RRTYSLIGYR…SGSVQVPPGA (187 aa)). Disordered regions lie at residues 953–1040 (SGSV…AESA), 1053–1109 (QSLV…PAAP), and 1169–1228 (QGGA…DDDW). The span at 1053–1063 (QSLVNPRSGQG) shows a compositional bias: polar residues. The segment covering 1064 to 1092 (QQQQQHHQAYQQPTAAQPAATSYSPAPAK) has biased composition (low complexity). The segment covering 1093 to 1106 (AAPPPPPPAPPAAP) has biased composition (pro residues). In terms of domain architecture, SH3 spans 1109–1170 (PAEPTYKALY…PAAYLEEVQG (62 aa)). Residues 1180–1194 (PTAGGASAGASLAEA) are compositionally biased toward low complexity.

It belongs to the TRAFAC class myosin-kinesin ATPase superfamily. Myosin family. In terms of processing, phosphorylation of the TEDS site (Ser-358) is required for the polarization of the actin cytoskeleton. Phosphorylation probably activates the myosin-I ATPase activity.

Its subcellular location is the cytoplasm. The protein localises to the cytoskeleton. The protein resides in the actin patch. Functionally, type-I myosin implicated in the organization of the actin cytoskeleton. Required for proper actin cytoskeleton polarization. At the cell cortex, assembles in patch-like structures together with proteins from the actin-polymerizing machinery and promotes actin assembly. Functions as actin nucleation-promoting factor (NPF) for the Arp2/3 complex. This is Myosin-1 (MYO1) from Yarrowia lipolytica (strain CLIB 122 / E 150) (Yeast).